The primary structure comprises 289 residues: MTAQLIDGNALAKQLRAEAAQRAAALTARGHQPGLAVILVGEDPASQVYVRNKIKACEDNGFLSSFDRYPADLSEADLLGRIDALNRDPRIHGILVQLPLPKHIDSHKVLEAIAPEKDVDGFHVANAGALMTGAPLFRPCTPYGCMKMLESINYPVRGANAVVVGASNIVGKPMAMLLLQSGATITICNSKTRDLAAHTREADIIVAAVGRRNIITADMVKPGAVVIDVGMNRDDAGKLCGDVDFAGVKEVAGYITPVPGGVGPMTITMLLINTLEAAERAAEGAALAA.

Residues 165 to 167 (GAS) and Ser-190 contribute to the NADP(+) site.

It belongs to the tetrahydrofolate dehydrogenase/cyclohydrolase family. As to quaternary structure, homodimer.

The enzyme catalyses (6R)-5,10-methylene-5,6,7,8-tetrahydrofolate + NADP(+) = (6R)-5,10-methenyltetrahydrofolate + NADPH. It carries out the reaction (6R)-5,10-methenyltetrahydrofolate + H2O = (6R)-10-formyltetrahydrofolate + H(+). The protein operates within one-carbon metabolism; tetrahydrofolate interconversion. Catalyzes the oxidation of 5,10-methylenetetrahydrofolate to 5,10-methenyltetrahydrofolate and then the hydrolysis of 5,10-methenyltetrahydrofolate to 10-formyltetrahydrofolate. The protein is Bifunctional protein FolD of Ralstonia pickettii (strain 12J).